A 239-amino-acid chain; its full sequence is Ribosomal RNA small subunit methyltransferase G (239 aa).

S-adenosyl-L-methionine contacts are provided by residues Gly-77, Phe-82, 128–129 (AE), and Arg-147. Residues 216-239 (EKKKQTPKKYPRKPGTPNKSPIEG) form a disordered region.

The protein belongs to the methyltransferase superfamily. RNA methyltransferase RsmG family.

The protein localises to the cytoplasm. Functionally, specifically methylates the N7 position of guanine in position 535 of 16S rRNA. The protein is Ribosomal RNA small subunit methyltransferase G of Bacillus pumilus (strain SAFR-032).